The following is a 577-amino-acid chain: Arginine--tRNA ligase (577 aa).

The 'HIGH' region signature appears at 122 to 132 (PNVAKEMHVGH).

This sequence belongs to the class-I aminoacyl-tRNA synthetase family. Monomer.

It is found in the cytoplasm. The catalysed reaction is tRNA(Arg) + L-arginine + ATP = L-arginyl-tRNA(Arg) + AMP + diphosphate. The protein is Arginine--tRNA ligase of Vibrio vulnificus (strain YJ016).